The primary structure comprises 313 residues: Beta-ketoacyl-[acyl-carrier-protein] synthase III (313 aa).

Residues Cys-112 and His-238 contribute to the active site. An ACP-binding region spans residues 239 to 243 (QANIR). Residue Asn-268 is part of the active site.

The protein belongs to the thiolase-like superfamily. FabH family. Homodimer.

The protein resides in the cytoplasm. It carries out the reaction malonyl-[ACP] + acetyl-CoA + H(+) = 3-oxobutanoyl-[ACP] + CO2 + CoA. The protein operates within lipid metabolism; fatty acid biosynthesis. Catalyzes the condensation reaction of fatty acid synthesis by the addition to an acyl acceptor of two carbons from malonyl-ACP. Catalyzes the first condensation reaction which initiates fatty acid synthesis and may therefore play a role in governing the total rate of fatty acid production. Possesses both acetoacetyl-ACP synthase and acetyl transacylase activities. Its substrate specificity determines the biosynthesis of branched-chain and/or straight-chain of fatty acids. This Staphylococcus aureus (strain bovine RF122 / ET3-1) protein is Beta-ketoacyl-[acyl-carrier-protein] synthase III.